The sequence spans 763 residues: DNA-binding protein SATB1 (763 aa).

Residues Met-1–Glu-15 are compositionally biased toward basic and acidic residues. A disordered region spans residues Met-1–Gly-54. A Nuclear localization signal motif is present at residues Val-20–Leu-40. Lys-51 participates in a covalent cross-link: Glycyl lysine isopeptide (Lys-Gly) (interchain with G-Cter in SUMO2). The CMP domain maps to Gly-71–Ser-172. Lys-136 is subject to N6-acetyllysine. The Protein interaction motif lies at Pro-139–Ser-143. In terms of domain architecture, CUTL spans Lys-175–Asp-248. Ser-185 carries the post-translational modification Phosphoserine. The interval Tyr-224–Thr-278 is nuclear matrix targeting sequence (NMTS). Polar residues predominate over residues His-266–Val-296. The segment at His-266 to Leu-307 is disordered. DNA-binding regions (CUT) lie at residues Leu-361–Arg-448 and Asn-484–Ser-571. DNA is bound by residues Gln-390, Arg-400–Arg-410, and Asn-425. Residues Gln-591 to Gln-607 show a composition bias toward low complexity. The disordered stretch occupies residues Gln-591–Thr-649. Ser-637 is subject to Phosphoserine. Positions Thr-645–Gly-704 form a DNA-binding region, homeobox. A Glycyl lysine isopeptide (Lys-Gly) (interchain with G-Cter in SUMO) cross-link involves residue Lys-744.

The protein belongs to the CUT homeobox family. In terms of assembly, interacts with CUX1 (via DNA-binding domains); the interaction inhibits the attachment of both proteins to DNA. Homodimer. Part of the nuclear protein complex gamma-globin promoter and enhancer binding factor (gamma-PE) composed at least of SATB1 and HOXB2. Interaction with CtBP1 when not acetylated stabilizes attachment to DNA and promotes transcription repression. Interacts with PCAF. Interacts with sumoylated PML and HDAC1 via the CMP domain. Interacts also with DYNLT3 and POLR2J2. Binds to EP300. As to quaternary structure, (Microbial infection) Interacts (via the CMP domain) with HIV-1 Tat. Sumoylated. Sumoylation promotes cleavage by caspases. Post-translationally, phosphorylated by PKC. Acetylated by PCAF. Phosphorylated form interacts with HDAC1, but unphosphorylated form interacts with PCAF. DNA binding properties are activated by phosphorylation and inactivated by acetylation. In opposition, gene expression is down-regulated by phosphorylation but up-regulated by acetylation. In terms of processing, cleaved at Asp-254 by caspase-3 and caspase-6 during T-cell apoptosis in thymus and during B-cell stimulation. The cleaved forms cannot dimerize and lose transcription regulation function because of impaired DNA and chromatin association. Expressed predominantly in thymus.

The protein resides in the nucleus matrix. The protein localises to the nucleus. It localises to the PML body. Its function is as follows. Crucial silencing factor contributing to the initiation of X inactivation mediated by Xist RNA that occurs during embryogenesis and in lymphoma. Binds to DNA at special AT-rich sequences, the consensus SATB1-binding sequence (CSBS), at nuclear matrix- or scaffold-associated regions. Thought to recognize the sugar-phosphate structure of double-stranded DNA. Transcriptional repressor controlling nuclear and viral gene expression in a phosphorylated and acetylated status-dependent manner, by binding to matrix attachment regions (MARs) of DNA and inducing a local chromatin-loop remodeling. Acts as a docking site for several chromatin remodeling enzymes (e.g. PML at the MHC-I locus) and also by recruiting corepressors (HDACs) or coactivators (HATs) directly to promoters and enhancers. Modulates genes that are essential in the maturation of the immune T-cell CD8SP from thymocytes. Required for the switching of fetal globin species, and beta- and gamma-globin genes regulation during erythroid differentiation. Plays a role in chromatin organization and nuclear architecture during apoptosis. Interacts with the unique region (UR) of cytomegalovirus (CMV). Alu-like motifs and SATB1-binding sites provide a unique chromatin context which seems preferentially targeted by the HIV-1 integration machinery. Moreover, HIV-1 Tat may overcome SATB1-mediated repression of IL2 and IL2RA (interleukin) in T-cells by binding to the same domain than HDAC1. Delineates specific epigenetic modifications at target gene loci, directly up-regulating metastasis-associated genes while down-regulating tumor-suppressor genes. Reprograms chromatin organization and the transcription profiles of breast tumors to promote growth and metastasis. Promotes neuronal differentiation of neural stem/progenitor cells in the adult subventricular zone, possibly by positively regulating the expression of NEUROD1. The chain is DNA-binding protein SATB1 from Homo sapiens (Human).